We begin with the raw amino-acid sequence, 797 residues long: Protocadherin beta-11 (797 aa).

A signal peptide spans 1–26; sequence MENQGTRTQQIRQVLLLFVLLGMSQA. At 27–690 the chain is on the extracellular side; the sequence is GSETWSFSVA…AQADSLTVYL (664 aa). Cadherin domains lie at 35-133, 138-242, 247-347, 352-451, and 456-561; these read VAEE…SPIF, MLLE…SPEF, YEVK…APEI, ITSP…APTF, and YTLF…SPFV. Asn-418, Asn-436, Asn-487, and Asn-567 each carry an N-linked (GlcNAc...) asparagine glycan. The 104-residue stretch at 568–671 folds into the Cadherin 6 domain; sequence GSAPCTELVP…LVDGFSQPYL (104 aa). Residues 691–711 form a helical membrane-spanning segment; that stretch reads VVALASVSSLFLFSVLLFVAV. Over 712–797 the chain is Cytoplasmic; it reads RLCRRSRAAS…TFRNSFGFNF (86 aa).

The protein resides in the cell membrane. Functionally, potential calcium-dependent cell-adhesion protein. May be involved in the establishment and maintenance of specific neuronal connections in the brain. The polypeptide is Protocadherin beta-11 (PCDHB11) (Homo sapiens (Human)).